We begin with the raw amino-acid sequence, 234 residues long: 2,3-bisphosphoglycerate-dependent phosphoglycerate mutase (234 aa).

Residues 8-15, 21-22, R60, 87-90, K98, 114-115, and 183-184 each bind substrate; these read RHGESVWN, TG, ERHY, RR, and GN. The Tele-phosphohistidine intermediate role is filled by H9. Residue E87 is the Proton donor/acceptor of the active site.

The protein belongs to the phosphoglycerate mutase family. BPG-dependent PGAM subfamily. Homodimer.

The catalysed reaction is (2R)-2-phosphoglycerate = (2R)-3-phosphoglycerate. Its pathway is carbohydrate degradation; glycolysis; pyruvate from D-glyceraldehyde 3-phosphate: step 3/5. Its function is as follows. Catalyzes the interconversion of 2-phosphoglycerate and 3-phosphoglycerate. This chain is 2,3-bisphosphoglycerate-dependent phosphoglycerate mutase, found in Geobacter sp. (strain M21).